Here is a 385-residue protein sequence, read N- to C-terminus: DNA replication and repair protein RecF (385 aa).

Residue 30–37 (GSNGFGKT) participates in ATP binding.

It belongs to the RecF family.

It is found in the cytoplasm. Its function is as follows. The RecF protein is involved in DNA metabolism; it is required for DNA replication and normal SOS inducibility. RecF binds preferentially to single-stranded, linear DNA. It also seems to bind ATP. The chain is DNA replication and repair protein RecF from Mycobacterium avium (strain 104).